Here is a 143-residue protein sequence, read N- to C-terminus: NADH-quinone oxidoreductase subunit A (143 aa).

The next 3 membrane-spanning stretches (helical) occupy residues 7-27, 63-83, and 93-113; these read GFGN…GGYL, FYVV…LYPW, and FALF…AYAW.

It belongs to the complex I subunit 3 family. NDH-1 is composed of 14 different subunits. Subunits NuoA, H, J, K, L, M, N constitute the membrane sector of the complex.

It is found in the cell inner membrane. It catalyses the reaction a quinone + NADH + 5 H(+)(in) = a quinol + NAD(+) + 4 H(+)(out). Functionally, NDH-1 shuttles electrons from NADH, via FMN and iron-sulfur (Fe-S) centers, to quinones in the respiratory chain. The immediate electron acceptor for the enzyme in this species is believed to be a menaquinone. Couples the redox reaction to proton translocation (for every two electrons transferred, four hydrogen ions are translocated across the cytoplasmic membrane), and thus conserves the redox energy in a proton gradient. The protein is NADH-quinone oxidoreductase subunit A of Chlorobium limicola (strain DSM 245 / NBRC 103803 / 6330).